We begin with the raw amino-acid sequence, 397 residues long: DnaJ homolog subfamily A member 1 (397 aa).

One can recognise a J domain in the interval 6-68 (TYYDVLGVKP…KKRELYDKGG (63 aa)). The residue at position 66 (Lys66) is an N6-acetyllysine. Residue Ser83 is modified to Phosphoserine. The CR-type zinc finger occupies 121 to 205 (GATRKLALQK…CNGRKIVREK (85 aa)). Residues Cys134, Cys137, Cys150, Cys153, Cys177, Cys180, Cys193, and Cys196 each contribute to the Zn(2+) site. 4 CXXCXGXG motif repeats span residues 134 to 141 (CDKCEGRG), 150 to 157 (CPNCRGTG), 177 to 184 (CMECQGHG), and 193 to 200 (CKSCNGRK). Position 335 is a phosphoserine (Ser335). The tract at residues 352–397 (VEETDEMDQVELVDFDPNQERRRHYNGEAYEDDEHHPRGGVQCQTS) is disordered. Residues 353–365 (EETDEMDQVELVD) are compositionally biased toward acidic residues. Position 381 is a phosphotyrosine (Tyr381). Cys394 carries the cysteine methyl ester modification. Cys394 carries S-farnesyl cysteine lipidation. Residues 395-397 (QTS) constitute a propeptide, removed in mature form.

Identified in a complex with HSPA1B and BAX. Interacts with RNF207.

It localises to the membrane. It is found in the cytoplasm. Its subcellular location is the microsome. The protein localises to the mitochondrion. The protein resides in the nucleus. It localises to the perinuclear region. In terms of biological role, co-chaperone for HSPA8/Hsc70. Plays a role in protein transport into mitochondria via its role as co-chaperone. Functions as co-chaperone for HSPA1B and negatively regulates the translocation of BAX from the cytosol to mitochondria in response to cellular stress, thereby protecting cells against apoptosis. Stimulates ATP hydrolysis, but not the folding of unfolded proteins mediated by HSPA1A (in vitro). Promotes apoptosis in response to cellular stress mediated by exposure to anisomycin or UV. The chain is DnaJ homolog subfamily A member 1 (DNAJA1) from Bos taurus (Bovine).